A 279-amino-acid chain; its full sequence is Putative ABC transporter ATP-binding protein GSU3001 (279 aa).

Residues 1-237 (MRFSVDLKAY…PAEMESVKLR (237 aa)) enclose the ABC transporter domain. 36–43 (GSNGSGKT) contacts ATP.

It belongs to the ABC transporter superfamily.

The protein localises to the cell inner membrane. In terms of biological role, probably part of an ABC transporter complex. Responsible for energy coupling to the transport system. This is Putative ABC transporter ATP-binding protein GSU3001 from Geobacter sulfurreducens (strain ATCC 51573 / DSM 12127 / PCA).